The following is a 299-amino-acid chain: uncharacterized protein (299 aa).

6 helical membrane passes run 32–52 (FILL…YLHL), 56–76 (SMII…SILY), 199–219 (LAIG…LLGA), 220–240 (YLIA…VKPE), 246–266 (FEIV…PIFG), and 273–293 (FLIS…ILKF).

It is found in the cell membrane. This is an uncharacterized protein from Methanocaldococcus jannaschii (strain ATCC 43067 / DSM 2661 / JAL-1 / JCM 10045 / NBRC 100440) (Methanococcus jannaschii).